The sequence spans 430 residues: Serine hydroxymethyltransferase 1 (430 aa).

Residues Leu132 and 136-138 (GHL) each bind (6S)-5,6,7,8-tetrahydrofolate. The residue at position 241 (Lys241) is an N6-(pyridoxal phosphate)lysine.

Belongs to the SHMT family. Homodimer. Requires pyridoxal 5'-phosphate as cofactor.

The protein resides in the cytoplasm. The enzyme catalyses (6R)-5,10-methylene-5,6,7,8-tetrahydrofolate + glycine + H2O = (6S)-5,6,7,8-tetrahydrofolate + L-serine. The protein operates within one-carbon metabolism; tetrahydrofolate interconversion. It functions in the pathway amino-acid biosynthesis; glycine biosynthesis; glycine from L-serine: step 1/1. Its function is as follows. Catalyzes the reversible interconversion of serine and glycine with tetrahydrofolate (THF) serving as the one-carbon carrier. This reaction serves as the major source of one-carbon groups required for the biosynthesis of purines, thymidylate, methionine, and other important biomolecules. Also exhibits THF-independent aldolase activity toward beta-hydroxyamino acids, producing glycine and aldehydes, via a retro-aldol mechanism. This Bordetella parapertussis (strain 12822 / ATCC BAA-587 / NCTC 13253) protein is Serine hydroxymethyltransferase 1.